The primary structure comprises 173 residues: Protein tyrosine phosphatase type IVA 3 (173 aa).

Positions 8-161 (APVEVSYKNM…YRPKQRLRFK (154 aa)) constitute a Tyrosine-protein phosphatase domain. C49 and C104 are joined by a disulfide. Residue D72 is the Proton donor of the active site. Catalysis depends on C104, which acts as the Phosphocysteine intermediate. R110 is a substrate binding site. Position 170 is a cysteine methyl ester (C170). Residue C170 is the site of S-farnesyl cysteine attachment. A propeptide spans 171–173 (CIM) (removed in mature form).

It belongs to the protein-tyrosine phosphatase family. Interacts with tubulin. Post-translationally, farnesylated. Farnesylation is required for membrane targeting. Unfarnesylated forms are shifted into the nucleus.

The protein localises to the cell membrane. Its subcellular location is the early endosome. The catalysed reaction is O-phospho-L-tyrosyl-[protein] + H2O = L-tyrosyl-[protein] + phosphate. Its activity is regulated as follows. Inhibited by sodium orthovanadate and peroxovanadium compounds, and by pentamidine. Its function is as follows. Protein tyrosine phosphatase which stimulates progression from G1 into S phase during mitosis. Enhances cell proliferation, cell motility and invasive activity, and promotes cancer metastasis. May be involved in the progression of cardiac hypertrophy by inhibiting intracellular calcium mobilization in response to angiotensin II. This is Protein tyrosine phosphatase type IVA 3 (PTP4A3) from Bos taurus (Bovine).